A 562-amino-acid polypeptide reads, in one-letter code: Protein FAM222B (562 aa).

Low complexity-rich tracts occupy residues 155–167 and 183–201; these read QQAL…LAHA and ALSH…HPQP. 3 disordered regions span residues 155-203, 219-245, and 537-562; these read QQAL…QPMA, LQHP…VTVS, and AHRA…PGYR.

Belongs to the FAM222 family.

This chain is Protein FAM222B (FAM222B), found in Homo sapiens (Human).